A 349-amino-acid polypeptide reads, in one-letter code: Protein RecA (349 aa).

66–73 (GPESSGKT) lines the ATP pocket.

The protein belongs to the RecA family.

It localises to the cytoplasm. Its function is as follows. Can catalyze the hydrolysis of ATP in the presence of single-stranded DNA, the ATP-dependent uptake of single-stranded DNA by duplex DNA, and the ATP-dependent hybridization of homologous single-stranded DNAs. It interacts with LexA causing its activation and leading to its autocatalytic cleavage. The protein is Protein RecA of Psychrobacter sp. (strain PRwf-1).